A 270-amino-acid polypeptide reads, in one-letter code: Phospholysine phosphohistidine inorganic pyrophosphate phosphatase (270 aa).

Positions 17 and 19 each coordinate Mg(2+). Substrate contacts are provided by residues 17-19 (DIS), 54-55 (TN), and Lys189. Asp214 contacts Mg(2+).

It belongs to the HAD-like hydrolase superfamily. As to quaternary structure, homodimer. Requires Mg(2+) as cofactor.

Its subcellular location is the cytoplasm. It localises to the nucleus. The catalysed reaction is diphosphate + H2O = 2 phosphate + H(+). Functionally, phosphatase that hydrolyzes imidodiphosphate, 3-phosphohistidine and 6-phospholysine. Has broad substrate specificity and can also hydrolyze inorganic diphosphate, but with lower efficiency. The chain is Phospholysine phosphohistidine inorganic pyrophosphate phosphatase (Lhpp) from Rattus norvegicus (Rat).